The primary structure comprises 203 residues: 3-isopropylmalate dehydratase small subunit (203 aa).

This sequence belongs to the LeuD family. LeuD type 1 subfamily. As to quaternary structure, heterodimer of LeuC and LeuD.

It catalyses the reaction (2R,3S)-3-isopropylmalate = (2S)-2-isopropylmalate. The protein operates within amino-acid biosynthesis; L-leucine biosynthesis; L-leucine from 3-methyl-2-oxobutanoate: step 2/4. Functionally, catalyzes the isomerization between 2-isopropylmalate and 3-isopropylmalate, via the formation of 2-isopropylmaleate. The polypeptide is 3-isopropylmalate dehydratase small subunit (Phenylobacterium zucineum (strain HLK1)).